A 377-amino-acid chain; its full sequence is ATP phosphoribosyltransferase regulatory subunit (377 aa).

Belongs to the class-II aminoacyl-tRNA synthetase family. HisZ subfamily. In terms of assembly, heteromultimer composed of HisG and HisZ subunits.

The protein resides in the cytoplasm. It participates in amino-acid biosynthesis; L-histidine biosynthesis; L-histidine from 5-phospho-alpha-D-ribose 1-diphosphate: step 1/9. Functionally, required for the first step of histidine biosynthesis. May allow the feedback regulation of ATP phosphoribosyltransferase activity by histidine. The chain is ATP phosphoribosyltransferase regulatory subunit from Sinorhizobium medicae (strain WSM419) (Ensifer medicae).